The primary structure comprises 1058 residues: MSSSPLSKKRRVSGPDPKPGSNCSPAQSALSEVSSVPTNGMAKNGSEADIDESLYSRQLYVLGHEAMKMLQTSSVLVSGLRGLGVEIAKNIILGGVKAVTLHDQGTTQWADLSSQFYLREEDIGKNRAEVSQPRLAELNSYVPVTAYTGPLVEDFLSSFQVVVLTNSPLEAQLRVGEFCHSRGIKLVVADTRGLFGQLFCDFGEEMVLTDSNGEQPLSAMVSMVTKDNPGVVTCLDEARHGFETGDFVSFSEVQGMIQLNGCQPMEIKVLGPYTFSICDTSNFSDYIRGGIVSQVKVPKKISFKSLPASLVEPDFVMTDFAKYSRPAQLHIGFQALHQFCALHNQPPRPRNEEDATELVGLAQAVNARSPPSVKQNSLDEDLIRKLAYVAAGDLAPINAFIGGLAAQEVMKACSGKFMPIMQWLYFDALECLPEDKEALTEEKCLPRQNRYDGQVAVFGSDFQEKLSKQKYFLVGAGAIGCELLKNFAMIGLGCGEGGEVVVTDMDTIEKSNLNRQFLFRPWDVTKLKSDTAAAAVRQMNPYIQVTSHQNRVGPDTERIYDDDFFQNLDGVANALDNIDARMYMDRRCVYYRKPLLESGTLGTKGNVQVVIPFLTESYSSSQDPPEKSIPICTLKNFPNAIEHTLQWARDEFEGLFKQPAENVNQYLTDSKFVERTLRLAGTQPLEVLEAVQRSLVLQRPQTWGDCVTWACHHWHTQYCNNIRQLLHNFPPDQLTSSGAPFWSGPKRCPHPLTFDVNNTLHLDYVMAAANLFAQTYGLTGSQDRAAVASLLQSVQVPEFTPKSGVKIHVSDQELQSANASVDDSRLEELKATLPSPDKLPGFKMYPIDFEKDDDSNFHMDFIVAASNLRAENYDISPADRHKSKLIAGKIIPAIATTTAAVVGLVCLELYKVVQGHQQLDSYKNGFLNLALPFFGFSEPLAAPRHQYYNQEWTLWDRFEVQGLQPNGEEMTLKQFLDYFKTEHKLEITMLSQGVSMLYSFFMPAAKLKERLDQPMTEIVSRVSKRKLGRHVRALVLELCCNDESGEDVEVPYVRYTIR.

Positions 1–46 are disordered; that stretch reads MSSSPLSKKRRVSGPDPKPGSNCSPAQSALSEVSSVPTNGMAKNGS. Residue S2 is modified to N-acetylserine. 5 positions are modified to phosphoserine: S4, S13, S21, S24, and S46. The span at 21-38 shows a compositional bias: polar residues; it reads SNCSPAQSALSEVSSVPT. Y55 is modified (phosphotyrosine). Repeat copies occupy residues 63–199 and 459–611. Residues 63 to 611 form a 2 approximate repeats region; sequence GHEAMKMLQT…GTKGNVQVVI (549 aa). Residues A478, D504, R515, K528, and 576 to 577 contribute to the ATP site; that span reads DN. At K528 the chain carries N6-succinyllysine. C632 functions as the Glycyl thioester intermediate in the catalytic mechanism. K671 is modified (N6-acetyllysine). Residue T800 is modified to Phosphothreonine. S810, S816, S820, and S835 each carry phosphoserine. At K980 the chain carries N6-acetyllysine.

This sequence belongs to the ubiquitin-activating E1 family. In terms of assembly, monomer. Interacts with GAN (via BTB domain). In terms of processing, ISGylated. Ubiquitously expressed. In testis, expressed in A spermatogonia and spermatids but at very low levels in pachytene spermatocytes.

Its subcellular location is the cytoplasm. The protein resides in the mitochondrion. It localises to the nucleus. The catalysed reaction is ATP + ubiquitin + [E1 ubiquitin-activating enzyme]-L-cysteine = AMP + diphosphate + S-ubiquitinyl-[E1 ubiquitin-activating enzyme]-L-cysteine.. It functions in the pathway protein modification; protein ubiquitination. Functionally, catalyzes the first step in ubiquitin conjugation to mark cellular proteins for degradation through the ubiquitin-proteasome system. Activates ubiquitin by first adenylating its C-terminal glycine residue with ATP, and thereafter linking this residue to the side chain of a cysteine residue in E1, yielding a ubiquitin-E1 thioester and free AMP. Essential for the formation of radiation-induced foci, timely DNA repair and for response to replication stress. Promotes the recruitment of TP53BP1 and BRCA1 at DNA damage sites. This chain is Ubiquitin-like modifier-activating enzyme 1 (Uba1), found in Mus musculus (Mouse).